The primary structure comprises 323 residues: Aldo-keto reductase family 1 member C18 (323 aa).

NADP(+) is bound by residues G20–Y24 and D50. The active-site Proton donor is Y55. A substrate-binding site is contributed by H117. NADP(+) contacts are provided by residues S166–N167, Q190, Y216–T221, and K270–N280.

It belongs to the aldo/keto reductase family. Monomer.

The protein resides in the cytoplasm. The catalysed reaction is (17R,20S)-17,20-dihydroxypregn-4-en-3-one + NADP(+) = 17alpha-hydroxyprogesterone + NADPH + H(+). It catalyses the reaction (17R,20S)-17,20-dihydroxypregn-4-en-3-one + NAD(+) = 17alpha-hydroxyprogesterone + NADH + H(+). Functionally, catalyzes the conversion of progesterone into 20-alpha-dihydroprogesterone (20 alpha-OHP). This Mus musculus (Mouse) protein is Aldo-keto reductase family 1 member C18 (Akr1c18).